The following is a 297-amino-acid chain: ER membrane protein complex subunit 2-A (297 aa).

3 TPR repeats span residues 87–120, 155–188, and 192–225; these read HRVK…DPTN, QEAW…NPHN, and YQQF…NNHN.

It belongs to the EMC2 family. In terms of assembly, component of the ER membrane protein complex (EMC).

The protein localises to the endoplasmic reticulum membrane. Part of the endoplasmic reticulum membrane protein complex (EMC) that enables the energy-independent insertion into endoplasmic reticulum membranes of newly synthesized membrane proteins. Preferentially accommodates proteins with transmembrane domains that are weakly hydrophobic or contain destabilizing features such as charged and aromatic residues. Involved in the cotranslational insertion of multi-pass membrane proteins in which stop-transfer membrane-anchor sequences become ER membrane spanning helices. It is also required for the post-translational insertion of tail-anchored/TA proteins in endoplasmic reticulum membranes. By mediating the proper cotranslational insertion of N-terminal transmembrane domains in an N-exo topology, with translocated N-terminus in the lumen of the ER, controls the topology of multi-pass membrane proteins. By regulating the insertion of various proteins in membranes, it is indirectly involved in many cellular processes. The chain is ER membrane protein complex subunit 2-A (emc2-a) from Xenopus laevis (African clawed frog).